Consider the following 539-residue polypeptide: uncharacterized protein (539 aa).

ABC transporter domains follow at residues 8 to 265 and 307 to 537; these read VRIT…SRAL and IELD…IGDM. 339-346 is an ATP binding site; sequence GDNGSGKS.

Belongs to the ABC transporter superfamily.

The protein resides in the mitochondrion. This is an uncharacterized protein from Saccharomyces cerevisiae (strain ATCC 204508 / S288c) (Baker's yeast).